The primary structure comprises 550 residues: Glucose-6-phosphate isomerase (550 aa).

The Proton donor role is filled by Glu-357. Residues His-388 and Lys-516 contribute to the active site.

The protein belongs to the GPI family.

It localises to the cytoplasm. It catalyses the reaction alpha-D-glucose 6-phosphate = beta-D-fructose 6-phosphate. It functions in the pathway carbohydrate biosynthesis; gluconeogenesis. Its pathway is carbohydrate degradation; glycolysis; D-glyceraldehyde 3-phosphate and glycerone phosphate from D-glucose: step 2/4. In terms of biological role, catalyzes the reversible isomerization of glucose-6-phosphate to fructose-6-phosphate. The sequence is that of Glucose-6-phosphate isomerase from Psychromonas ingrahamii (strain DSM 17664 / CCUG 51855 / 37).